Reading from the N-terminus, the 303-residue chain is Ornithine carbamoyltransferase (303 aa).

Residues 52–55, Gln79, Arg103, and 130–133 contribute to the carbamoyl phosphate site; these read STRT and HPCQ. L-ornithine is bound by residues Asn161, Asp222, and 226–227; that span reads SM. Carbamoyl phosphate is bound by residues 262-263 and Arg290; that span reads CL.

The protein belongs to the aspartate/ornithine carbamoyltransferase superfamily. OTCase family.

The protein localises to the cytoplasm. It carries out the reaction carbamoyl phosphate + L-ornithine = L-citrulline + phosphate + H(+). The protein operates within amino-acid biosynthesis; L-arginine biosynthesis; L-arginine from L-ornithine and carbamoyl phosphate: step 1/3. Functionally, reversibly catalyzes the transfer of the carbamoyl group from carbamoyl phosphate (CP) to the N(epsilon) atom of ornithine (ORN) to produce L-citrulline. In Geobacter sulfurreducens (strain ATCC 51573 / DSM 12127 / PCA), this protein is Ornithine carbamoyltransferase.